We begin with the raw amino-acid sequence, 156 residues long: Ribosome maturation factor RimP (156 aa).

It belongs to the RimP family.

The protein resides in the cytoplasm. Its function is as follows. Required for maturation of 30S ribosomal subunits. This is Ribosome maturation factor RimP from Dictyoglomus thermophilum (strain ATCC 35947 / DSM 3960 / H-6-12).